We begin with the raw amino-acid sequence, 376 residues long: Putative MSV199 domain-containing protein 468L (376 aa).

Residues 178–261 adopt a coiled-coil conformation; that stretch reads QKREKETMSR…VNTVQKKLDI (84 aa).

The protein is Putative MSV199 domain-containing protein 468L of Invertebrate iridescent virus 6 (IIV-6).